Consider the following 412-residue polypeptide: Na(+)-translocating NADH-quinone reductase subunit B (412 aa).

3 helical membrane passes run 57-77 (MILV…NVGL), 127-147 (VFFL…EVLF), and 163-183 (SILF…ALGI). Residue threonine 236 is modified to FMN phosphoryl threonine. A run of 5 helical transmembrane segments spans residues 270 to 290 (GSIG…ILFG), 297 to 317 (IVAG…VIGS), 322 to 342 (MFAM…GMMF), 358 to 378 (WSYG…NPAY), and 381 to 401 (GMML…YLVV).

The protein belongs to the NqrB/RnfD family. As to quaternary structure, composed of six subunits; NqrA, NqrB, NqrC, NqrD, NqrE and NqrF. It depends on FMN as a cofactor.

Its subcellular location is the cell inner membrane. It catalyses the reaction a ubiquinone + n Na(+)(in) + NADH + H(+) = a ubiquinol + n Na(+)(out) + NAD(+). NQR complex catalyzes the reduction of ubiquinone-1 to ubiquinol by two successive reactions, coupled with the transport of Na(+) ions from the cytoplasm to the periplasm. NqrA to NqrE are probably involved in the second step, the conversion of ubisemiquinone to ubiquinol. This is Na(+)-translocating NADH-quinone reductase subunit B from Klebsiella pneumoniae subsp. pneumoniae (strain ATCC 700721 / MGH 78578).